A 132-amino-acid chain; its full sequence is Small ribosomal subunit protein uS8c (132 aa).

It belongs to the universal ribosomal protein uS8 family. In terms of assembly, part of the 30S ribosomal subunit.

The protein resides in the plastid. It localises to the chloroplast. Its function is as follows. One of the primary rRNA binding proteins, it binds directly to 16S rRNA central domain where it helps coordinate assembly of the platform of the 30S subunit. In Chaetosphaeridium globosum (Charophycean green alga), this protein is Small ribosomal subunit protein uS8c (rps8).